A 324-amino-acid chain; its full sequence is NADH-ubiquinone oxidoreductase chain 1 (324 aa).

9 consecutive transmembrane segments (helical) span residues Leu9 to Ile29, Pro43 to Ile63, Phe77 to Leu97, Leu106 to Gly126, Ile146 to Phe166, Thr177 to Ala197, Leu228 to Phe248, Gln259 to Ile279, and Phe299 to Ser319.

This sequence belongs to the complex I subunit 1 family.

The protein resides in the mitochondrion inner membrane. It carries out the reaction a ubiquinone + NADH + 5 H(+)(in) = a ubiquinol + NAD(+) + 4 H(+)(out). Functionally, core subunit of the mitochondrial membrane respiratory chain NADH dehydrogenase (Complex I) that is believed to belong to the minimal assembly required for catalysis. Complex I functions in the transfer of electrons from NADH to the respiratory chain. The immediate electron acceptor for the enzyme is believed to be ubiquinone. The sequence is that of NADH-ubiquinone oxidoreductase chain 1 (MT-ND1) from Scyliorhinus canicula (Small-spotted catshark).